We begin with the raw amino-acid sequence, 370 residues long: Putative replication factor C small subunit L478 (370 aa).

ATP is bound at residue 41 to 48 (GPSGSGKK). The span at 342–353 (RNKEPEKSEKTK) shows a compositional bias: basic and acidic residues. The disordered stretch occupies residues 342 to 370 (RNKEPEKSEKTKSKTGKLSRTNSKKTIKN). Basic residues predominate over residues 354–370 (SKTGKLSRTNSKKTIKN).

The protein belongs to the activator 1 small subunits family. RfcS subfamily.

Its function is as follows. Part of the RFC clamp loader complex which loads the PCNA sliding clamp onto DNA. This is Putative replication factor C small subunit L478 from Acanthamoeba polyphaga (Amoeba).